Consider the following 152-residue polypeptide: uncharacterized protein (152 aa).

Residues 12–34 (ALLYLGGGLLAMIYGLITFFMAF) traverse the membrane as a helical segment.

It to B.subtilis YfjD.

It localises to the membrane. This is an uncharacterized protein from Bacillus subtilis (strain 168).